The following is a 1804-amino-acid chain: Collagen alpha-1(XI) chain (1804 aa).

The N-terminal stretch at 1-34 (MEPWSRWKTKRWIWDLTISTLALTFLFQAREVRG) is a signal peptide. Residues 35–511 (AAPVDILKAL…SKGPTISAQE (477 aa)) constitute a propeptide, N-terminal propeptide. 2 disulfide bridges follow: Cys60–Cys242 and Cys181–Cys235. The Laminin G-like domain occupies 70–242 (DVAYRVTEEA…DYCDHYSPDC (173 aa)). Residues 229–417 (KAAYDYCDHY…DFTETSINGH (189 aa)) form a nonhelical region region. Over residues 315 to 329 (YQTETPRRVSGSNEP) the composition is skewed to polar residues. Disordered stretches follow at residues 315–334 (YQTETPRRVSGSNEPNPVEE) and 433–506 (EPGM…KGPT). Residues 418–506 (GAYGEKGQKG…YGGDGSKGPT (89 aa)) form a triple-helical region (interrupted) region. The Collagen-like 1 domain occupies 440–488 (GPPGPAGPAGLMGPPGLQGPSGLPGDPGDRGPPGRPGLPGADGLPGPPG). Composition is skewed to low complexity over residues 447–465 (PAGLMGPPGLQGPSGLPGD) and 477–494 (LPGADGLPGPPGTMLMLP). Residues 507–509 (ISA) are short nonhelical segment. The interval 510–527 (QEAQAQAILQQARIALRG) is telopeptide. Residues 526–1567 (RGPPGPMGLT…SIQGDAGDNI (1042 aa)) are disordered. 2 Collagen-like domains span residues 527-584 (GPPG…GADG) and 567-623 (PPGP…GPPG). Positions 528–1540 (PPGPMGLTGR…PGPPGPPGEV (1013 aa)) are triple-helical region. 2 stretches are compositionally biased toward gly residues: residues 539 to 548 (GPVGGPGSAG) and 581 to 590 (GADGGRGMPG). Lys610 bears the Allysine mark. Low complexity predominate over residues 639–655 (PRGLPGEAGPRGLLGPR). Residues 697 to 708 (QGLPGPQGPIGP) are compositionally biased toward pro residues. Residues 715–726 (QGKPGLAGLPGA) are compositionally biased toward low complexity. Positions 728-781 (GPPGHPGKEGQSGEKGALGPPGPQGPIGYPGPRGVKGADGVRGLKGSKGEKGED) constitute a Collagen-like 4 domain. A compositionally biased stretch (basic and acidic residues) spans 805–814 (RGEDGPEGPK). 3 stretches are compositionally biased toward low complexity: residues 873 to 901 (KPGPRGQRGPTGPRGSRGARGPTGKPGPK), 916 to 925 (RGPQGPQGPV), and 969 to 979 (PQGPTGETGPI). The segment covering 1040–1049 (GLKGGEGPQG) has biased composition (gly residues). The span at 1074-1083 (RPGPQGPPGP) shows a compositional bias: pro residues. A compositionally biased stretch (low complexity) spans 1084–1108 (AGEKGAPGEKGPQGPAGRDGVQGPV). Residues 1160–1169 (GIAGGDGEPG) show a composition bias toward gly residues. The span at 1216 to 1227 (MGPPGPPGPRGP) shows a compositional bias: pro residues. Low complexity-rich tracts occupy residues 1240 to 1249 (PGSIGSVGVV) and 1282 to 1296 (AGPPGAAGPAGIKGP). Over residues 1341–1360 (QPGPPGPSGEAGPPGPPGKR) the composition is skewed to pro residues. Composition is skewed to low complexity over residues 1383-1392 (AEGPPGKTGP) and 1417-1426 (QGLPGAAGQD). Collagen-like domains lie at 1427-1482 (GPPG…SPGA) and 1481-1539 (GAKG…PPGE). Positions 1428 to 1437 (PPGPLGPPGL) are enriched in pro residues. The residue at position 1450 (Lys1450) is an Allysine. Residues 1453–1462 (PGLIGLIGPP) show a composition bias toward low complexity. Residues 1481-1490 (GAKGDGGIPG) show a composition bias toward gly residues. The span at 1491-1507 (PAGPIGPPGPPGLPGPA) shows a compositional bias: pro residues. Residues 1509–1519 (PKGNKGSSGPT) are compositionally biased toward low complexity. Residues 1528–1537 (PGPPGPPGPP) show a composition bias toward pro residues. Residues 1541–1561 (IQPLPILSPKKTRRHTESIQG) form a nonhelical region (C-terminal) region. Residues 1562–1804 (DAGDNILDYS…FEVGPACFLG (243 aa)) constitute a propeptide, C-terminal propeptide. Residues 1575 to 1803 (EEIFGSLNSL…GFEVGPACFL (229 aa)) enclose the Fibrillar collagen NC1 domain. A disulfide bridge connects residues Cys1605 and Cys1637. Asp1623, Asn1625, Gln1626, Cys1628, and Asp1631 together coordinate Ca(2+). An N-linked (GlcNAc...) asparagine glycan is attached at Asn1638. Disulfide bonds link Cys1646–Cys1801 and Cys1712–Cys1755.

The protein belongs to the fibrillar collagen family. In terms of assembly, trimers composed of three different chains: alpha 1(XI), alpha 2(XI), and alpha 3(XI). Alpha 3(XI) is a post-translational modification of alpha 1(II). Alpha 1(V) can also be found instead of alpha 3(XI)=1(II). In terms of processing, prolines at the third position of the tripeptide repeating unit (G-X-Y) are hydroxylated in some or all of the chains. Post-translationally, N-glycosylated.

It is found in the secreted. The protein localises to the extracellular space. It localises to the extracellular matrix. Functionally, may play an important role in fibrillogenesis by controlling lateral growth of collagen II fibrils. The polypeptide is Collagen alpha-1(XI) chain (Col11a1) (Mus musculus (Mouse)).